The sequence spans 118 residues: Beta-2-microglobulin (118 aa).

A signal peptide spans 1–20; the sequence is MARFVALVLLGLLSLSGLDA. Residues 25 to 112 form the Ig-like C1-type domain; sequence PKIQVYSRHP…HVTLEQPRIV (88 aa). Cysteine 45 and cysteine 99 are oxidised to a cystine.

It belongs to the beta-2-microglobulin family. As to quaternary structure, heterodimer of an alpha chain and a beta chain. Beta-2-microglobulin is the beta-chain of major histocompatibility complex class I molecules. Forms a heterotrimer with MR1 and a metabolite antigen.

The protein resides in the secreted. Functionally, component of the class I major histocompatibility complex (MHC). Involved in the presentation of peptide antigens to the immune system. The protein is Beta-2-microglobulin (B2M) of Bos taurus (Bovine).